The sequence spans 249 residues: 1-(5-phosphoribosyl)-5-[(5-phosphoribosylamino)methylideneamino] imidazole-4-carboxamide isomerase (249 aa).

Asp8 acts as the Proton acceptor in catalysis. Asp130 (proton donor) is an active-site residue.

It belongs to the HisA/HisF family.

The protein resides in the cytoplasm. The catalysed reaction is 1-(5-phospho-beta-D-ribosyl)-5-[(5-phospho-beta-D-ribosylamino)methylideneamino]imidazole-4-carboxamide = 5-[(5-phospho-1-deoxy-D-ribulos-1-ylimino)methylamino]-1-(5-phospho-beta-D-ribosyl)imidazole-4-carboxamide. It functions in the pathway amino-acid biosynthesis; L-histidine biosynthesis; L-histidine from 5-phospho-alpha-D-ribose 1-diphosphate: step 4/9. The protein is 1-(5-phosphoribosyl)-5-[(5-phosphoribosylamino)methylideneamino] imidazole-4-carboxamide isomerase of Chromohalobacter salexigens (strain ATCC BAA-138 / DSM 3043 / CIP 106854 / NCIMB 13768 / 1H11).